The following is a 305-amino-acid chain: Ribonuclease BN (305 aa).

7 residues coordinate Zn(2+): histidine 64, histidine 66, aspartate 68, histidine 69, histidine 141, aspartate 212, and histidine 270. The Proton acceptor role is filled by aspartate 68.

This sequence belongs to the RNase Z family. RNase BN subfamily. In terms of assembly, homodimer. Zn(2+) is required as a cofactor.

Functionally, zinc phosphodiesterase, which has both exoribonuclease and endoribonuclease activities. This chain is Ribonuclease BN, found in Escherichia coli O127:H6 (strain E2348/69 / EPEC).